A 400-amino-acid polypeptide reads, in one-letter code: Elongation factor Tu 2 (400 aa).

Residues 10-209 (KPHVNIGTIG…AVDEYIPTPQ (200 aa)) form the tr-type G domain. Residues 19 to 26 (GHVDHGKT) are G1. Position 19–26 (19–26 (GHVDHGKT)) interacts with GTP. Threonine 26 serves as a coordination point for Mg(2+). The tract at residues 60 to 64 (GITIN) is G2. The interval 81-84 (DCPG) is G3. GTP-binding positions include 81 to 85 (DCPGH) and 136 to 139 (NKAD). The segment at 136-139 (NKAD) is G4. The interval 174–176 (SAL) is G5.

It belongs to the TRAFAC class translation factor GTPase superfamily. Classic translation factor GTPase family. EF-Tu/EF-1A subfamily. Monomer.

The protein resides in the cytoplasm. The enzyme catalyses GTP + H2O = GDP + phosphate + H(+). In terms of biological role, GTP hydrolase that promotes the GTP-dependent binding of aminoacyl-tRNA to the A-site of ribosomes during protein biosynthesis. The sequence is that of Elongation factor Tu 2 from Pelotomaculum thermopropionicum (strain DSM 13744 / JCM 10971 / SI).